Consider the following 294-residue polypeptide: Metallophosphoesterase MPPED2 (294 aa).

The Mn(2+) site is built by aspartate 65, histidine 67, aspartate 86, asparagine 117, and histidine 213. Position 117 to 118 (117 to 118) interacts with GMP; it reads NH. Residues 225 to 226 and 252 to 255 contribute to the GMP site; these read KE and GIHE. Histidine 254 is a Mn(2+) binding site.

The protein belongs to the UPF0046 family. Homodimer. Mn(2+) is required as a cofactor. Requires Co(2+) as cofactor. Expressed predominantly in fetal brain.

With respect to regulation, inhibited by nmolar levels of AMP and GMP. In terms of biological role, displays low metallophosphoesterase activity (in vitro). May play a role in the development of the nervous system. This is Metallophosphoesterase MPPED2 (MPPED2) from Homo sapiens (Human).